The sequence spans 92 residues: Small ribosomal subunit protein uS19c (92 aa).

This sequence belongs to the universal ribosomal protein uS19 family.

It localises to the plastid. Its function is as follows. Protein S19 forms a complex with S13 that binds strongly to the 16S ribosomal RNA. In Cuscuta gronovii (Common dodder), this protein is Small ribosomal subunit protein uS19c.